Here is a 97-residue protein sequence, read N- to C-terminus: RNA-binding protein Hfq (97 aa).

One can recognise a Sm domain in the interval 10–70; that stretch reads DPFLNALRKE…ISTIVPARSV (61 aa). The interval 75–97 is disordered; it reads ENRPQAAPASTLVQVETVQQPAE. The segment covering 85–97 has biased composition (polar residues); sequence TLVQVETVQQPAE.

This sequence belongs to the Hfq family. As to quaternary structure, homohexamer.

RNA chaperone that binds small regulatory RNA (sRNAs) and mRNAs to facilitate mRNA translational regulation in response to envelope stress, environmental stress and changes in metabolite concentrations. Also binds with high specificity to tRNAs. This is RNA-binding protein Hfq from Neisseria meningitidis serogroup C / serotype 2a (strain ATCC 700532 / DSM 15464 / FAM18).